Reading from the N-terminus, the 290-residue chain is MLSNKRGIHSASGGIDLRTLREYCLFEDFDVCMPFNPMGVPGGKGNRGSDGAIRGMLPLGDAMGDLFTAGKAGSTKMEDKERFDPYEDNSGTTICLKQGDFIVVAGDTRHSSSMVINSREMSKIFQVGDFLLTGTGFYADTHEVYVKMVYEIRQYEVDDSINIHSAANLLSKILYSKRFFPYYSFCVLSGFEKGKPYVYSYDPIGSFGSVTCVCSGSGRSMIQPLLDSFIDKKNWNNAEETQLSQEDCIRLVVKAFNSAAERDVKTKDNLEVCVMRENQVMRETFPLRRD.

Belongs to the peptidase T1B family. In terms of assembly, the 26S proteasome consists of a 20S proteasome core and two 19S regulatory subunits. The 20S proteasome core is composed of 28 subunits that are arranged in four stacked rings, resulting in a barrel-shaped structure. The two end rings are each formed by seven alpha subunits, and the two central rings are each formed by seven beta subunits. The catalytic chamber with the active sites is on the inside of the barrel.

It is found in the cytoplasm. The protein localises to the nucleus. In terms of biological role, non-catalytic component of the proteasome which degrades poly-ubiquitinated proteins in the cytoplasm and in the nucleus. It is essential for the regulated turnover of proteins and for the removal of misfolded proteins. The proteasome is a multicatalytic proteinase complex that is characterized by its ability to cleave peptides with Arg, Phe, Tyr, Leu, and Glu adjacent to the leaving group at neutral or slightly basic pH. It has an ATP-dependent proteolytic activity. The sequence is that of Probable proteasome subunit beta type-6 (PRE7) from Encephalitozoon cuniculi (strain GB-M1) (Microsporidian parasite).